The sequence spans 438 residues: Probable imidazolonepropionase (438 aa).

4-imidazolone-5-propanoate-binding residues include Tyr159 and His192. Tyr159 contacts N-formimidoyl-L-glutamate. His260 is a binding site for Fe(3+). Residue His260 coordinates Zn(2+). Residue Glu263 participates in 4-imidazolone-5-propanoate binding. Asp334 serves as a coordination point for Fe(3+). Position 334 (Asp334) interacts with Zn(2+). Asn336 lines the N-formimidoyl-L-glutamate pocket.

It belongs to the metallo-dependent hydrolases superfamily. HutI family. Zn(2+) serves as cofactor. It depends on Fe(3+) as a cofactor.

It catalyses the reaction 4-imidazolone-5-propanoate + H2O = N-formimidoyl-L-glutamate. It participates in amino-acid degradation; L-histidine degradation into L-glutamate; N-formimidoyl-L-glutamate from L-histidine: step 3/3. The polypeptide is Probable imidazolonepropionase (amdhd1) (Xenopus laevis (African clawed frog)).